A 131-amino-acid polypeptide reads, in one-letter code: Thrombocorticin (131 aa).

Cysteines 3 and 111 form a disulfide. Residues 28–60 (RNESVEVKDSNGNTVSRGSGSSSSGGTFTVINM) form a disordered region. Low complexity predominate over residues 37–54 (SNGNTVSRGSGSSSSGGT). The Pseudodomain-swapping motif motif lies at 117–131 (DFNDVFVLITGLVRG).

Binds to fucose and mannose in a calcium-dependent manner (in vitro). Acts as an agonist for human thrombopoietin receptor MPL (in vitro). Binding of sugar-moieties may promote the interaction with human MPL on the cell surface (in vitro). Catalyzes MPL dimerization and activation, and modulates internalization of the receptor (in vitro). Exhibits proliferation activity in murine recombinant Ba/F3 cells expressing human MPL (Ba/F3-huMPL) (in vitro). Induces phosphorylation of STAT5 in recombinant Ba/F3-huMPL cells, possibly by stimulating MPL on the cell surface to transduce signals via Jak/STAT signaling pathway (in vitro). Does not aggregate rabbit erythrocytes, indicating absent lectin-like agglutination activity (in vitro). This Corticium sp. (Marine sponge) protein is Thrombocorticin.